The sequence spans 556 residues: Peptidylarginine deiminase (556 aa).

Residues 1 to 23 (MKKLLQAKALILALGLFQLPAIA) form the signal peptide. Positions 24 to 43 (QTQMQADRTNGQFATEEMQR) are excised as a propeptide. The active-site Amidino-cysteine intermediate is the Cys351.

This sequence belongs to the agmatine deiminase family. Requires FAD as cofactor. FMN serves as cofactor.

It is found in the secreted. Inhibited by cysteine and TLCK. Inhibited by high concentration of thiourea and thio-L-citrulline. Functionally, deiminates the guanidino group of C-terminal arginine residues on a variety of peptides, including the vasoregulatory peptide-hormone bradykinin, to yield ammonia and a citrulline residue. May promote the growth of the pathogen in the periodontal pocket by producing ammonia, ammonia having a protective effect during acidic cleaning cycles in the mouth. In Porphyromonas gingivalis (strain ATCC BAA-308 / W83), this protein is Peptidylarginine deiminase.